Here is a 1582-residue protein sequence, read N- to C-terminus: Hybrid PKS-NRPS synthetase TAS1 (1582 aa).

The interval 33–387 (IPLSKVQEVL…GEDTAAASRV (355 aa)) is condensation (C) domain. Residues 499–892 (RSRAATQPDE…KLHILGRMNN (394 aa)) form an adenylation (A) domain region. Residues 1015–1092 (NLVDRLEASI…RQAQRLSELV (78 aa)) form the Carrier domain. One can recognise a Ketosynthase family 3 (KS3) domain in the interval 1127–1574 (APLFAIVGMA…GVNAHCILAS (448 aa)). Residues cysteine 1294 and histidine 1432 each act as for beta-ketoacyl synthase activity in the active site. Residues 1460 to 1485 (ESRCSSGAISPTGTEQQPSDTKQTPR) are disordered. The segment covering 1462-1485 (RCSSGAISPTGTEQQPSDTKQTPR) has biased composition (polar residues). Residue asparagine 1498 is the For beta-ketoacyl synthase activity of the active site.

It in the N-terminal section; belongs to the NRP synthetase family. Pantetheine 4'-phosphate is required as a cofactor.

It catalyses the reaction acetoacetyl-CoA + L-isoleucine + ATP = tenuazonic acid + AMP + diphosphate + CoA + 2 H(+). Its function is as follows. Hybrid PKS-NRPS synthetase that mediates the biosynthesis of the toxin tenuazonic acid (TeA), an inhibitor of protein biosynthesis on ribosomes by suppressing the release of new protein. TAS1 alone is sufficient for TeA synthesis via the condensation of isoleucine (Ile) with acetoacetyl-CoA by the N-terminal NRPS module and subsequent cyclization conducted by the C-terminal KS domain. The chain is Hybrid PKS-NRPS synthetase TAS1 from Cordyceps militaris (strain CM01) (Caterpillar fungus).